Reading from the N-terminus, the 433-residue chain is Phosphomethylpyrimidine synthase (433 aa).

Substrate-binding positions include Asn-69, Met-98, Tyr-127, His-163, Ser-185–Gly-187, Asp-226–Arg-229, and Glu-265. His-269 serves as a coordination point for Zn(2+). Tyr-292 contributes to the substrate binding site. A Zn(2+)-binding site is contributed by His-333. [4Fe-4S] cluster is bound by residues Cys-409, Cys-412, and Cys-416.

The protein belongs to the ThiC family. The cofactor is [4Fe-4S] cluster.

It carries out the reaction 5-amino-1-(5-phospho-beta-D-ribosyl)imidazole + S-adenosyl-L-methionine = 4-amino-2-methyl-5-(phosphooxymethyl)pyrimidine + CO + 5'-deoxyadenosine + formate + L-methionine + 3 H(+). Its pathway is cofactor biosynthesis; thiamine diphosphate biosynthesis. In terms of biological role, catalyzes the synthesis of the hydroxymethylpyrimidine phosphate (HMP-P) moiety of thiamine from aminoimidazole ribotide (AIR) in a radical S-adenosyl-L-methionine (SAM)-dependent reaction. This is Phosphomethylpyrimidine synthase from Clostridioides difficile (strain 630) (Peptoclostridium difficile).